The chain runs to 137 residues: uncharacterized protein (137 aa).

Residues 1 to 15 form the signal peptide; that stretch reads MKKLAIAGALLLLAG. C16 carries N-palmitoyl cysteine lipidation. C16 is lipidated: S-diacylglycerol cysteine.

The protein localises to the cell membrane. This is an uncharacterized protein from Escherichia coli (strain K12).